The primary structure comprises 162 residues: Probable chemoreceptor glutamine deamidase CheD (162 aa).

The protein belongs to the CheD family.

It catalyses the reaction L-glutaminyl-[protein] + H2O = L-glutamyl-[protein] + NH4(+). Probably deamidates glutamine residues to glutamate on methyl-accepting chemotaxis receptors (MCPs), playing an important role in chemotaxis. The chain is Probable chemoreceptor glutamine deamidase CheD from Syntrophotalea carbinolica (strain DSM 2380 / NBRC 103641 / GraBd1) (Pelobacter carbinolicus).